A 341-amino-acid chain; its full sequence is Cyclic GMP-AMP synthase (341 aa).

S56 serves as a coordination point for ATP. Residues D71 and D73 contribute to the active site. D73 provides a ligand contact to Mg(2+). Residue N109 participates in ATP binding. Residue D123 is part of the active site. Position 123 (D123) interacts with Mg(2+). Residues L192 and D238 each coordinate ATP.

Belongs to the CD-NTase family. B04 subfamily. As to quaternary structure, monomer. Mg(2+) is required as a cofactor.

It carries out the reaction GTP + ATP = 3',3'-cGAMP + 2 diphosphate. Cyclic nucleotide synthase (second messenger synthase) of a CBASS antivirus system. CBASS (cyclic oligonucleotide-based antiphage signaling system) provides immunity against bacteriophage. The CD-NTase protein synthesizes cyclic nucleotides in response to infection; these serve as specific second messenger signals. The signals activate a diverse range of effectors, leading to bacterial cell death and thus abortive phage infection. A type II-A(GA) CBASS system. In terms of biological role, catalyzes the synthesis of 3'3'-cyclic GMP-AMP (3'3'-cGAMP) from GTP and ATP, a second messenger in cell signal transduction. May make another product. Controls the activity of the CBASS cGAMP-activated phospholipase effector protein. The polypeptide is Cyclic GMP-AMP synthase (Bacteroides fragilis).